The chain runs to 346 residues: Putative agmatine deiminase (346 aa).

The Amidino-cysteine intermediate role is filled by Cys-333.

Belongs to the agmatine deiminase family.

The enzyme catalyses agmatine + H2O = N-carbamoylputrescine + NH4(+). The chain is Putative agmatine deiminase from Legionella pneumophila (strain Paris).